The sequence spans 335 residues: Interleukin-12 subunit beta (335 aa).

The N-terminal stretch at 1–22 (MCPQKLTISWFAIVLLVSPLMA) is a signal peptide. The Ig-like C2-type domain occupies 23–106 (MWELEKDVYV…LSHSHLLLHK (84 aa)). Asn-47 is a glycosylation site (N-linked (GlcNAc...) asparagine). The cysteines at positions 50 and 90 are disulfide-linked. N-linked (GlcNAc...) asparagine glycosylation is found at Asn-122, Asn-132, and Asn-220. Residues 233-324 (PDPPKNLQMK…QDRYYNSSCS (92 aa)) form the Fibronectin type-III domain.

The protein belongs to the IL-12B family. Heterodimer with IL12A; disulfide-linked. The heterodimer is known as interleukin IL-12. Heterodimer with IL23A; disulfide-linked. The heterodimer is known as interleukin IL-23. Also secreted as a monomer. Interacts with NBR1; this interaction promotes IL-12 secretion.

The protein localises to the secreted. In terms of biological role, cytokine that can act as a growth factor for activated T and NK cells, enhance the lytic activity of NK/lymphokine-activated killer cells, and stimulate the production of IFN-gamma by resting PBMC. Functionally, associates with IL23A to form the IL-23 interleukin, a heterodimeric cytokine which functions in innate and adaptive immunity. IL-23 may constitute with IL-17 an acute response to infection in peripheral tissues. IL-23 binds to a heterodimeric receptor complex composed of IL12RB1 and IL23R, activates the Jak-Stat signaling cascade, stimulates memory rather than naive T-cells and promotes production of pro-inflammatory cytokines. IL-23 induces autoimmune inflammation and thus may be responsible for autoimmune inflammatory diseases and may be important for tumorigenesis. The protein is Interleukin-12 subunit beta (Il12b) of Mus musculus (Mouse).